Reading from the N-terminus, the 208-residue chain is Large ribosomal subunit protein uL4 (208 aa).

The tract at residues 45 to 77 (RQGTHKAKERAEIKGSTRKIKKQKGTGTARAGS) is disordered.

Belongs to the universal ribosomal protein uL4 family. Part of the 50S ribosomal subunit.

Functionally, one of the primary rRNA binding proteins, this protein initially binds near the 5'-end of the 23S rRNA. It is important during the early stages of 50S assembly. It makes multiple contacts with different domains of the 23S rRNA in the assembled 50S subunit and ribosome. Its function is as follows. Forms part of the polypeptide exit tunnel. The protein is Large ribosomal subunit protein uL4 of Christiangramia forsetii (strain DSM 17595 / CGMCC 1.15422 / KT0803) (Gramella forsetii).